A 207-amino-acid chain; its full sequence is Outer-membrane lipoprotein LolB (207 aa).

Residues 1 to 21 (MPLPDFRFIRLLPLAALVLTA) form the signal peptide. The N-palmitoyl cysteine moiety is linked to residue cysteine 22. The S-diacylglycerol cysteine moiety is linked to residue cysteine 22.

Belongs to the LolB family. Monomer.

The protein resides in the cell outer membrane. Plays a critical role in the incorporation of lipoproteins in the outer membrane after they are released by the LolA protein. The polypeptide is Outer-membrane lipoprotein LolB (Escherichia coli O6:K15:H31 (strain 536 / UPEC)).